The following is a 1044-amino-acid chain: R3H domain-containing protein 2 (1044 aa).

Disordered regions lie at residues 23-71 and 106-147; these read EESV…AKSN and SCPS…QEYT. Residues 36–56 show a composition bias toward basic and acidic residues; the sequence is PSKEDVEKEGEENGLRQETQR. Residue serine 37 is modified to Phosphoserine. The segment covering 58 to 71 has biased composition (basic residues); sequence TSSHGHARKRAKSN. The segment covering 109–143 has biased composition (basic and acidic residues); the sequence is SDKEEEKSTKDVSEKEDKDKSKEKVPRKMLSRDSS. A Phosphoserine modification is found at serine 143. The region spanning 169 to 232 is the R3H domain; the sequence is RMMLLKLEQE…AVIINKTSST (64 aa). The region spanning 233-303 is the SUZ domain; that stretch reads RIPEQRFSEH…VRERIFARET (71 aa). Basic and acidic residues-rich tracts occupy residues 261–270 and 277–288; these read DASMDRDDNQ and DGRRSKSIEERE. Disordered stretches follow at residues 261-288, 320-408, 433-485, 502-533, 551-600, 729-770, and 807-848; these read DASM…EERE, SSSS…LSRP, CTAQ…FSPS, MAED…LFQP, GQPL…SNQQ, GTSP…SPSG, and GQKP…SLSN. Residues 338 to 349 are compositionally biased toward low complexity; it reads SRTSSSRQSSTD. 3 positions are modified to phosphoserine: serine 362, serine 365, and serine 381. Positions 433–449 are enriched in low complexity; it reads CTAQQQQQQQQQQQQLP. 2 stretches are compositionally biased toward polar residues: residues 509–521 and 554–572; these read PFGQ…QGST and LPTS…QQVL. Low complexity predominate over residues 757–770; the sequence is PQMSQQYSGVSPSG. The segment covering 818–848 has biased composition (polar residues); it reads GSPQANAQMGSSPVTSPTQSPAPSPVTSLSN. Phosphoserine is present on residues serine 921 and serine 923. 2 positions are modified to phosphothreonine: threonine 924 and threonine 928.

It is found in the nucleus. The sequence is that of R3H domain-containing protein 2 (R3hdm2) from Mus musculus (Mouse).